The primary structure comprises 332 residues: Glycerol-3-phosphate dehydrogenase [NAD(P)+] (332 aa).

Positions 11, 12, 32, 33, and 106 each coordinate NADPH. Positions 106 and 136 each coordinate sn-glycerol 3-phosphate. Residue alanine 140 coordinates NADPH. Residues lysine 191, aspartate 244, serine 254, arginine 255, and asparagine 256 each contribute to the sn-glycerol 3-phosphate site. Lysine 191 serves as the catalytic Proton acceptor. Arginine 255 provides a ligand contact to NADPH. Valine 280 and glutamate 282 together coordinate NADPH.

Belongs to the NAD-dependent glycerol-3-phosphate dehydrogenase family.

The protein localises to the cytoplasm. The catalysed reaction is sn-glycerol 3-phosphate + NAD(+) = dihydroxyacetone phosphate + NADH + H(+). It carries out the reaction sn-glycerol 3-phosphate + NADP(+) = dihydroxyacetone phosphate + NADPH + H(+). It participates in membrane lipid metabolism; glycerophospholipid metabolism. Catalyzes the reduction of the glycolytic intermediate dihydroxyacetone phosphate (DHAP) to sn-glycerol 3-phosphate (G3P), the key precursor for phospholipid synthesis. The polypeptide is Glycerol-3-phosphate dehydrogenase [NAD(P)+] (Corynebacterium glutamicum (strain R)).